The chain runs to 118 residues: Small ribosomal subunit protein uS13 (118 aa).

Residues 94–118 (SLPLRGQRTKTNARTRKGPRKPIKK) form a disordered region.

It belongs to the universal ribosomal protein uS13 family. Part of the 30S ribosomal subunit. Forms a loose heterodimer with protein S19. Forms two bridges to the 50S subunit in the 70S ribosome.

Its function is as follows. Located at the top of the head of the 30S subunit, it contacts several helices of the 16S rRNA. In the 70S ribosome it contacts the 23S rRNA (bridge B1a) and protein L5 of the 50S subunit (bridge B1b), connecting the 2 subunits; these bridges are implicated in subunit movement. Contacts the tRNAs in the A and P-sites. This is Small ribosomal subunit protein uS13 from Colwellia psychrerythraea (strain 34H / ATCC BAA-681) (Vibrio psychroerythus).